The primary structure comprises 384 residues: Protein Brevis radix-like 4 (384 aa).

2 disordered regions span residues 1–35 (MLTC…SQLK) and 50–78 (PCTA…SDFE). In terms of domain architecture, BRX 1 spans 150–205 (KEWVAQVEPGVLITFVSLPGGGNDLKRIRFSRDMFNKLQAQRWWADNYDKVMELYN). Disordered regions lie at residues 214 to 270 (FPLP…DHNS) and 304 to 325 (SIRS…SNAS). The segment covering 221–235 (RSEDENAKVEYHPED) has biased composition (basic and acidic residues). A compositionally biased stretch (polar residues) spans 260–270 (YSSSDSLDHNS). Residues 309 to 318 (SSRDADRSEE) are compositionally biased toward basic and acidic residues. The BRX 2 domain maps to 329–384 (NEWVEQDEPGVYITIKVLPGGKRELRRVRFSRERFGEMHARLWWEENRARIHEQYL).

The protein belongs to the BRX family. In terms of tissue distribution, expressed in roots.

It localises to the nucleus. This chain is Protein Brevis radix-like 4 (BRXL4), found in Arabidopsis thaliana (Mouse-ear cress).